The chain runs to 105 residues: Small ribosomal subunit protein bS18 (105 aa).

The segment covering Met-1–Pro-10 has biased composition (polar residues). The segment at Met-1–Lys-34 is disordered. Positions Ser-12–Gly-25 are enriched in low complexity.

This sequence belongs to the bacterial ribosomal protein bS18 family. In terms of assembly, part of the 30S ribosomal subunit. Forms a tight heterodimer with protein bS6.

Functionally, binds as a heterodimer with protein bS6 to the central domain of the 16S rRNA, where it helps stabilize the platform of the 30S subunit. This is Small ribosomal subunit protein bS18 from Acidobacterium capsulatum (strain ATCC 51196 / DSM 11244 / BCRC 80197 / JCM 7670 / NBRC 15755 / NCIMB 13165 / 161).